A 416-amino-acid polypeptide reads, in one-letter code: Beta sliding clamp (416 aa).

Belongs to the beta sliding clamp family. As to quaternary structure, forms a ring-shaped head-to-tail homodimer around DNA which binds and tethers DNA polymerases and other proteins to the DNA. The DNA replisome complex has a single clamp-loading complex (3 tau and 1 each of delta, delta', psi and chi subunits) which binds 3 Pol III cores (1 core on the leading strand and 2 on the lagging strand) each with a beta sliding clamp dimer. Additional proteins in the replisome are other copies of gamma, psi and chi, Ssb, DNA helicase and RNA primase.

Its subcellular location is the cytoplasm. Its function is as follows. Confers DNA tethering and processivity to DNA polymerases and other proteins. Acts as a clamp, forming a ring around DNA (a reaction catalyzed by the clamp-loading complex) which diffuses in an ATP-independent manner freely and bidirectionally along dsDNA. Initially characterized for its ability to contact the catalytic subunit of DNA polymerase III (Pol III), a complex, multichain enzyme responsible for most of the replicative synthesis in bacteria; Pol III exhibits 3'-5' exonuclease proofreading activity. The beta chain is required for initiation of replication as well as for processivity of DNA replication. The polypeptide is Beta sliding clamp (dnaN) (Chlamydia trachomatis serovar D (strain ATCC VR-885 / DSM 19411 / UW-3/Cx)).